We begin with the raw amino-acid sequence, 1105 residues long: Probable diguanylate cyclase DgcE (1105 aa).

Transmembrane regions (helical) follow at residues 9 to 29, 38 to 58, 64 to 84, 88 to 108, 127 to 147, 156 to 176, 190 to 207, 211 to 228, 236 to 256, and 270 to 290; these read LIAL…SFIF, QFGT…VAFY, MWPG…ILLF, SLNM…AVLL, LALG…VLLT, FLIW…LGLL, LLFE…LSWL, YLPW…WSAV, FLIF…DPSL, and WLPF…MYAF. The PAS 1 domain occupies 300 to 370; it reads SETHFRNAME…QQVEKLISGE (71 aa). 2 consecutive PAC domains span residues 374–426 and 501–552; these read YSME…VNQQ and FKLE…ALFQ. One can recognise a PAS 2 domain in the interval 553-623; it reads EKERLHITLD…LMENIYSADT (71 aa). The PAC 3 domain occupies 626–680; that stretch reads SAIEQDVVLHCRSGGSYDVHYSITPLSTLDGSNIGSVLVIQDVTESRKMLRQLSY. Residues 712–845 form the GGDEF domain; the sequence is QRHALVFIDL…GRGRVTVYEP (134 aa). Aspartate 720 contacts Mg(2+). Residues asparagine 728, histidine 733, and aspartate 737 each coordinate substrate. Position 763 (aspartate 763) interacts with Mg(2+). Residue aspartate 763 is the Proton acceptor of the active site. Residue arginine 783 coordinates substrate. Residues 855–1104 enclose the EAL domain; the sequence is AAMSLDEQWR…LLVNSSYFAI (250 aa).

Homodimer. Mg(2+) is required as a cofactor.

Its subcellular location is the cell inner membrane. It carries out the reaction 2 GTP = 3',3'-c-di-GMP + 2 diphosphate. The protein operates within purine metabolism; 3',5'-cyclic di-GMP biosynthesis. Functionally, catalyzes the synthesis of cyclic-di-GMP (c-di-GMP) via the condensation of 2 GTP molecules. Involved in the control of the switch from cell motility to adhesion via regulation of cellular levels of c-di-GMP. Part of a signaling cascade that regulates curli biosynthesis. The cascade is composed of two c-di-GMP control modules, in which c-di-GMP controlled by the DgcE/PdeH pair (module I) regulates the activity of the DgcM/PdeR pair (module II), which in turn regulates activity of the transcription factor MlrA and expression of the master biofilm regulator csgD. This is Probable diguanylate cyclase DgcE from Escherichia coli (strain K12).